The following is a 343-amino-acid chain: Methionine import ATP-binding protein MetN 1 (343 aa).

The ABC transporter domain maps to 2 to 241 (IKLSNITKVF…PKTPLAQKFI (240 aa)). 38–45 (GASGAGKS) contributes to the ATP binding site.

This sequence belongs to the ABC transporter superfamily. Methionine importer (TC 3.A.1.24) family. As to quaternary structure, the complex is composed of two ATP-binding proteins (MetN), two transmembrane proteins (MetI) and a solute-binding protein (MetQ).

It is found in the cell inner membrane. It carries out the reaction L-methionine(out) + ATP + H2O = L-methionine(in) + ADP + phosphate + H(+). The enzyme catalyses D-methionine(out) + ATP + H2O = D-methionine(in) + ADP + phosphate + H(+). Part of the ABC transporter complex MetNIQ involved in methionine import. Responsible for energy coupling to the transport system. In Salmonella typhimurium (strain LT2 / SGSC1412 / ATCC 700720), this protein is Methionine import ATP-binding protein MetN 1.